Here is a 613-residue protein sequence, read N- to C-terminus: Dihydroxy-acid dehydratase (613 aa).

Asp-81 lines the Mg(2+) pocket. Position 122 (Cys-122) interacts with [2Fe-2S] cluster. Residues Asp-123 and Lys-124 each contribute to the Mg(2+) site. At Lys-124 the chain carries N6-carboxylysine. Cys-195 contacts [2Fe-2S] cluster. Glu-491 contacts Mg(2+). The Proton acceptor role is filled by Ser-517.

Belongs to the IlvD/Edd family. Homodimer. Requires [2Fe-2S] cluster as cofactor. The cofactor is Mg(2+).

The enzyme catalyses (2R)-2,3-dihydroxy-3-methylbutanoate = 3-methyl-2-oxobutanoate + H2O. It catalyses the reaction (2R,3R)-2,3-dihydroxy-3-methylpentanoate = (S)-3-methyl-2-oxopentanoate + H2O. The protein operates within amino-acid biosynthesis; L-isoleucine biosynthesis; L-isoleucine from 2-oxobutanoate: step 3/4. It functions in the pathway amino-acid biosynthesis; L-valine biosynthesis; L-valine from pyruvate: step 3/4. Functionally, functions in the biosynthesis of branched-chain amino acids. Catalyzes the dehydration of (2R,3R)-2,3-dihydroxy-3-methylpentanoate (2,3-dihydroxy-3-methylvalerate) into 2-oxo-3-methylpentanoate (2-oxo-3-methylvalerate) and of (2R)-2,3-dihydroxy-3-methylbutanoate (2,3-dihydroxyisovalerate) into 2-oxo-3-methylbutanoate (2-oxoisovalerate), the penultimate precursor to L-isoleucine and L-valine, respectively. The protein is Dihydroxy-acid dehydratase of Vibrio vulnificus (strain YJ016).